The chain runs to 235 residues: ATP synthase subunit a (235 aa).

5 helical membrane-spanning segments follow: residues 17–37 (TTNIVSGLIIYAIVFFTLYGM), 76–96 (SFFAFVLFVFIFFANQFGLIF), 113–133 (PVVTLTLSLMVMVLAFAAGVA), 179–201 (LLMSLIANMAFSHGILTIIPGLF), and 211–230 (VFIGSIQAYVFVTLTTVYIS).

Belongs to the ATPase A chain family. In terms of assembly, F-type ATPases have 2 components, CF(1) - the catalytic core - and CF(0) - the membrane proton channel. CF(1) has five subunits: alpha(3), beta(3), gamma(1), delta(1), epsilon(1). CF(0) has three main subunits: a(1), b(2) and c(9-12). The alpha and beta chains form an alternating ring which encloses part of the gamma chain. CF(1) is attached to CF(0) by a central stalk formed by the gamma and epsilon chains, while a peripheral stalk is formed by the delta and b chains.

It localises to the cell membrane. Its function is as follows. Key component of the proton channel; it plays a direct role in the translocation of protons across the membrane. The sequence is that of ATP synthase subunit a from Limosilactobacillus reuteri subsp. reuteri (strain JCM 1112) (Lactobacillus reuteri).